Reading from the N-terminus, the 875-residue chain is MIGCGACEPEVKMAGGQAAAALPTWKMAARRSLSARGRGVLQAAAGRLLPLLLLSCCWGAGGCTAAGENEETVIIGLRLEDTNDVSFMEGGALRVSERTRVKLRVYGQNINNETWSRIAFTEHERRRHTPSERGLGGPAPPEPDSGPQRCGIRTSDIIILPHIILNRRTSGIIEIEIKPLRKMEKSKSYYLCTSLSTPALGAGGSGSASGTVGGKGGAGVAGLPPPPWAETTWIYHDGEDTKMIVGEEKKFLLPFWLQVIFISLLLCLSGMFSGLNLGLMALDPMELRIVQNCGTEKEKNYAKRIEPVRRQGNYLLCSLLLGNVLVNTTLTILLDDIAGSGLVAVVVSTIGIVIFGEIVPQAICSRHGLAVGANTIFLTKFFMMMTFPASYPVSKLLDCVLGQEIGTVYNREKLLEMLRVTDPYNDLVKEELNIIQGALELRTKTVEDVMTPLRDCFMITGEAILDFNTMSEIMESGYTRIPVFEGERSNIVDLLFVKDLAFVDPDDCTPLKTITKFYNHPLHFVFNDTKLDAMLEEFKKGKSHLAIVQRVNNEGEGDPFYEVLGIVTLEDVIEEIIKSEILDETDLYTDNRTKKKVAHRERKQDFSAFKQTDSEMKVKISPQLLLAMHRFLATEVEAFSPSQMSEKILLRLLKHPNVIQELKYDEKNKKAPECYLYQRNKPVDYFVLILQGKVEVEAGKEGMKFEASAFSYYGVMALTASPVPLSLSRTFVVSRTEVLAAGSPGENKSPPRPCGLNHSDSLSRSDRIDAMTPTLGSSNNQLSSSFLQVYIPDYSVRALSDLQFVKISRQQYQNALMASRMDKTPQSSDSENTKIELTLTELHDGLPDETANLLNEQNCVSHNKANHSLHSEGAI.

Topologically, residues 1-250 are extracellular; the sequence is MIGCGACEPE…TKMIVGEEKK (250 aa). N-linked (GlcNAc...) asparagine glycosylation is present at asparagine 112. Residues 121–149 form a disordered region; sequence TEHERRRHTPSERGLGGPAPPEPDSGPQR. The chain crosses the membrane as a helical span at residues 251–271; it reads FLLPFWLQVIFISLLLCLSGM. In terms of domain architecture, CNNM transmembrane spans 251-431; sequence FLLPFWLQVI…DPYNDLVKEE (181 aa). Over 272–313 the chain is Cytoplasmic; the sequence is FSGLNLGLMALDPMELRIVQNCGTEKEKNYAKRIEPVRRQGN. Residues 314-334 constitute an intramembrane region (helical); that stretch reads YLLCSLLLGNVLVNTTLTILL. The Cytoplasmic portion of the chain corresponds to 335 to 338; sequence DDIA. A helical membrane pass occupies residues 339-359; the sequence is GSGLVAVVVSTIGIVIFGEIV. The Extracellular portion of the chain corresponds to 360 to 368; that stretch reads PQAICSRHG. The chain crosses the membrane as a helical span at residues 369-389; that stretch reads LAVGANTIFLTKFFMMMTFPA. At 390–875 the chain is on the cytoplasmic side; the sequence is SYPVSKLLDC…NHSLHSEGAI (486 aa). 2 CBS domains span residues 450–511 and 518–584; these read MTPL…CTPL and YNHP…ILDE. The disordered stretch occupies residues 741-763; sequence AGSPGENKSPPRPCGLNHSDSLS. Serine 761 carries the post-translational modification Phosphoserine.

This sequence belongs to the ACDP family. As to quaternary structure, isoform 1 and isoform 2 may interact with each other. The N-terminus is cleaved within the endoplasmic reticulum. The signal peptidase complex seems to be involved in the processing, but the exact cleavage site has not been identified. Widely expressed, with highest levels in kidney, lung, spleen and testis. In the kidney, predominantly expressed in the distal convoluted tubule and, at lower levels, in the connecting tubule (at protein level).

It localises to the cell membrane. Its function is as follows. Divalent metal cation transporter. Mediates transport of divalent metal cations in an order of Mg(2+) &gt; Co(2+) &gt; Mn(2+) &gt; Sr(2+) &gt; Ba(2+) &gt; Cu(2+) &gt; Fe(2+). In Mus musculus (Mouse), this protein is Metal transporter CNNM2 (Cnnm2).